Consider the following 31-residue polypeptide: Cytochrome b6-f complex subunit 6 (31 aa).

Residues 4 to 26 traverse the membrane as a helical segment; that stretch reads IVSYFGFLLTASTITPALFIGLS.

It belongs to the PetL family. The 4 large subunits of the cytochrome b6-f complex are cytochrome b6, subunit IV (17 kDa polypeptide, PetD), cytochrome f and the Rieske protein, while the 4 small subunits are PetG, PetL, PetM and PetN. The complex functions as a dimer.

It localises to the plastid. The protein resides in the chloroplast thylakoid membrane. In terms of biological role, component of the cytochrome b6-f complex, which mediates electron transfer between photosystem II (PSII) and photosystem I (PSI), cyclic electron flow around PSI, and state transitions. PetL is important for photoautotrophic growth as well as for electron transfer efficiency and stability of the cytochrome b6-f complex. The polypeptide is Cytochrome b6-f complex subunit 6 (Nymphaea alba (White water-lily)).